Consider the following 418-residue polypeptide: D-amino acid dehydrogenase (418 aa).

Residue 3-17 (VLILGSGVVGVATAY) participates in FAD binding.

Belongs to the DadA oxidoreductase family. FAD serves as cofactor.

The enzyme catalyses a D-alpha-amino acid + A + H2O = a 2-oxocarboxylate + AH2 + NH4(+). The protein operates within amino-acid degradation; D-alanine degradation; NH(3) and pyruvate from D-alanine: step 1/1. In terms of biological role, oxidative deamination of D-amino acids. The protein is D-amino acid dehydrogenase of Granulibacter bethesdensis (strain ATCC BAA-1260 / CGDNIH1).